The primary structure comprises 182 residues: Large ribosomal subunit protein uL6 (182 aa).

The protein belongs to the universal ribosomal protein uL6 family. In terms of assembly, part of the 50S ribosomal subunit.

In terms of biological role, this protein binds to the 23S rRNA, and is important in its secondary structure. It is located near the subunit interface in the base of the L7/L12 stalk, and near the tRNA binding site of the peptidyltransferase center. The protein is Large ribosomal subunit protein uL6 of Nostoc punctiforme (strain ATCC 29133 / PCC 73102).